Here is an 89-residue protein sequence, read N- to C-terminus: MAKKSKIVKDQKQRELVLKYSKLRLELKKKADYAGLSQIPAKASPVRLKNRDSIDGRPRGYIRKFGISRINFRQLAHQGKLPGVRKTSW.

It belongs to the universal ribosomal protein uS14 family. As to quaternary structure, part of the 30S ribosomal subunit. Contacts proteins S3 and S10.

Binds 16S rRNA, required for the assembly of 30S particles and may also be responsible for determining the conformation of the 16S rRNA at the A site. This is Small ribosomal subunit protein uS14 from Aster yellows witches'-broom phytoplasma (strain AYWB).